The chain runs to 333 residues: MGEQQQQVERQPDLPPGFRFHPTDEEIITFYLAPKVVDSRGFCVAAIGEVDLNKCEPWDLPGKAKMNGEKEWYFYCQKDRKYPTGMRTNRATEAGYWKATGKDKEIFRNHHMLIGMKKTLVFYKGRAPKGDKTNWVMHEYRLADASPPQPPPPPSSAEPPRQDDWAVCRIFHKSSGIKKPVQVPMQMPMQMQMPVAHQVPAANYQQQMAMASASIIQVPMQMQMPSMSDQLQMLDDFSTGSLMAPPPPPPSYSTLPGFPLQINGGAQQFVGNPSMYYQQQQQQQQQQMDMAAGGFVVSEPSSLVVSPQDAADQNNAADISSVACNMDATIWKY.

The NAC domain maps to 14–173; that stretch reads LPPGFRFHPT…DWAVCRIFHK (160 aa). A DNA-binding region spans residues 114–179; sequence IGMKKTLVFY…IFHKSSGIKK (66 aa). Residues 143–162 form a disordered region; the sequence is ADASPPQPPPPPSSAEPPRQ. Residues 147–157 are compositionally biased toward pro residues; it reads PPQPPPPPSSA.

Forms homodimers. Forms heterodimers with NAC20. Forms heterodimers with NAC23. Expressed in developing seeds.

It localises to the nucleus. In terms of biological role, transcription factor that acts redundantly with NAC20 to regulate the expression of genes involved in the biosynthesis of starch and storage proteins in grain. Directly binds to the promoters of starch synthase 1 (SS1), pullulanase (PUL), glutelin A1 (GLUA1), glutelins B4 and B5 (GLUB4 and GLUB5), alpha-globulin and 16 kDa prolamin, and activates their expression. Possesses transactivation activity in yeast. This chain is NAC domain-containing protein 26, found in Oryza sativa subsp. indica (Rice).